A 222-amino-acid chain; its full sequence is Non-structural protein V (222 aa).

The tract at residues 61 to 107 is disordered; sequence ESTNHQKGSVGGGAKPKKPRPKIAIVPADDKTVPGKPIPNPLLGLDS. Residues His-171, Cys-190, Cys-194, Cys-206, Cys-208, Cys-211, Cys-215, and Cys-218 each coordinate Zn(2+).

It belongs to the paramyxoviruses V protein family. In terms of assembly, interacts with host DDB1, STAT2 and IFIH1/MDA5. Interacts with host RIGI regulatory protein (via CARDs domain) and host TRIM25 (via SPRY domain); these interactions prevent TRIM25-mediated ubiquitination of RIG-I and disrupts downstream RIG-I signaling.

It localises to the host cytoplasm. In terms of biological role, plays an essential role in the inhibition of host immune response. Prevents the establishment of cellular antiviral state by blocking interferon-alpha/beta (IFN-alpha/beta) production and signaling pathway. Interacts with host IFIH1/MDA5 and DHX58/LGP2 to inhibit the transduction pathway involved in the activation of IFN-beta promoter, thus protecting the virus against cell antiviral state. Efficiently blocks type I IFN signaling following infection by behaving as a substrate receptor for CUL4-DDB1 E3 ligase complex and targeting host STAT1 for proteasomal degradation. Blocks the type I interferon signaling pathway by disrupting the RIG-I signaling pathway. The sequence is that of Non-structural protein V (P/V) from Parainfluenza virus 5 (strain W3) (PIV5).